The sequence spans 357 residues: F-box only protein 25 (357 aa).

Positions 1–83 (MPFLGQDWRS…NDTNTQCFYR (83 aa)) are interaction with beta-actin. In terms of domain architecture, F-box spans 225–273 (LTLSDLPVHMLSNILYRFSDGWDIVTLGQVTPTLSALSEDRQLWKKLCQ).

As to quaternary structure, part of a SCF (SKP1-cullin-F-box) protein ligase complex consisting of FBXO25, SKP1, CUL1 and RBX1. Interacts directly with SKP1 and CUL1. Interacts (via C-terminus) with beta-actin (via N-terminus).

It localises to the nucleus. It participates in protein modification; protein ubiquitination. In terms of biological role, substrate-recognition component of the SCF (SKP1-CUL1-F-box protein)-type E3 ubiquitin ligase complex. May play a role in accumulation of expanded polyglutamine (polyQ) protein huntingtin (HTT). This Bos taurus (Bovine) protein is F-box only protein 25 (FBXO25).